The following is a 239-amino-acid chain: Small ribosomal subunit protein uS3c (239 aa).

Residues 43 to 139 enclose the KH type-2 domain; sequence IKNYIQKNRK…RFNISIEKVK (97 aa). The tract at residues 50 to 74 is disordered; sequence NRKKGSNRKIESDSSSEVITHNRKM.

Belongs to the universal ribosomal protein uS3 family. As to quaternary structure, part of the 30S ribosomal subunit.

It is found in the plastid. The protein resides in the chloroplast. In Triticum aestivum (Wheat), this protein is Small ribosomal subunit protein uS3c (rps3).